We begin with the raw amino-acid sequence, 508 residues long: Gasdermin-C (508 aa).

A triggers pyroptosis region spans residues methionine 1–glycine 257.

Belongs to the gasdermin family. As to quaternary structure, homooligomer; homooligomeric ring-shaped pore complex containing 27-28 subunits when inserted in the membrane. Post-translationally, cleavage by CASP8 relieves autoinhibition by releasing the N-terminal moiety (Gasdermin-C, N-terminal) that initiates pyroptosis. The cleavage site is unclear. According to a publication, it takes place after Asp-240 in response to alpha-ketoglutarate. Another paper reports cleavage by CASP8 after Asp-365. Palmitoylated. In terms of tissue distribution, expressed mainly in trachea and spleen. In the esophagus, expressed in differentiating cells and probably in differentiated cells. Also detected in gastric epithelium.

The protein resides in the cytoplasm. It localises to the cytosol. Its subcellular location is the cell membrane. Its activity is regulated as follows. The full-length protein before cleavage is inactive: intramolecular interactions between N- and C-terminal domains mediate autoinhibition in the absence of activation signal. The intrinsic pyroptosis-inducing activity is carried by the released N-terminal moiety (Gasdermin-C, N-terminal) following cleavage by caspase CASP8. Functionally, this form constitutes the precursor of the pore-forming protein: upon cleavage, the released N-terminal moiety (Gasdermin-C, N-terminal) binds to membranes and forms pores, triggering pyroptosis. Pore-forming protein that causes membrane permeabilization and pyroptosis. Produced by the cleavage of gasdermin-C by caspase CASP8 in response to death signals. After cleavage, moves to the plasma membrane where it strongly binds to membrane inner leaflet lipids. Homooligomerizes within the membrane and forms pores of 10-15 nanometers (nm) of inner diameter, triggering pyroptosis. The protein is Gasdermin-C of Homo sapiens (Human).